The sequence spans 360 residues: Inward rectifier potassium channel 13 (360 aa).

At M1 to D50 the chain is on the cytoplasmic side. Residues M51–V77 traverse the membrane as a helical segment. The Extracellular segment spans residues L78–S105. Residues F106–Y122 constitute an intramembrane region (helical; Pore-forming). Positions T119–T124 match the Selectivity filter motif. At G123–C131 the chain is on the extracellular side. The chain crosses the membrane as a helical span at residues P132 to V157. The Cytoplasmic portion of the chain corresponds to A158–E360. S201 is modified (phosphoserine; by PKC). S287 is modified (phosphoserine; by PKA).

This sequence belongs to the inward rectifier-type potassium channel (TC 1.A.2.1) family. KCNJ13 subfamily. As to quaternary structure, homotetramer. Interacts with RAB28; the interaction may facilitate cone outer segments phagocytosis. In terms of processing, phosphorylation at Ser-201 by PKC strongly inhibits ionic currents, while phosphorylation at Ser-287 by PKA increases them. Predominantly expressed in small intestine. Expression is also detected in stomach, kidney, and all central nervous system regions tested with the exception of spinal cord.

The protein localises to the membrane. It is found in the cell membrane. The enzyme catalyses K(+)(in) = K(+)(out). Its activity is regulated as follows. Inhibited by Ba(2+) and Cs(+), although sensitivity to those inhibitors is much lower than in other Kir channels. Its function is as follows. Inward rectifier potassium channels are characterized by a greater tendency to allow potassium to flow into the cell rather than out of it. Their voltage dependence is regulated by the concentration of extracellular potassium; as external potassium is raised, the voltage range of the channel opening shifts to more positive voltages. The inward rectification is mainly due to the blockage of outward current by internal magnesium. KCNJ13 has a very low single channel conductance, low sensitivity to block by external barium and cesium, and no dependence of its inward rectification properties on the internal blocking particle magnesium. In Homo sapiens (Human), this protein is Inward rectifier potassium channel 13 (KCNJ13).